The chain runs to 92 residues: Small ribosomal subunit protein uS19 (92 aa).

The protein belongs to the universal ribosomal protein uS19 family.

Its function is as follows. Protein S19 forms a complex with S13 that binds strongly to the 16S ribosomal RNA. This is Small ribosomal subunit protein uS19 from Methylobacterium sp. (strain 4-46).